A 228-amino-acid polypeptide reads, in one-letter code: MPHVEMLLLAVAALWVCVRGQEPGRKAVADRYAVYWNSTNPRFQQGDYHIDVCINDYLDVFCPHYEDSVPEDKTERYVLYMVNFDGYSSCDHISKGFKRWECNRPHSPNGPLKFSEKFQLFTPFSLGFEFRPGREYFYISSAIPDNGRRSCLKLKVFVRPANSCMKTIGVHDRVFDVNDKVENSLEPADDTVRESAEPSRGENAAQTPRIPIRLLATLLFLLAMLLIL.

The signal sequence occupies residues 1–20; it reads MPHVEMLLLAVAALWVCVRG. The Ephrin RBD domain maps to 29 to 162; sequence ADRYAVYWNS…KLKVFVRPAN (134 aa). A glycan (N-linked (GlcNAc...) asparagine) is linked at asparagine 37. 2 disulfides stabilise this stretch: cysteine 62–cysteine 102 and cysteine 90–cysteine 151. Asparagine 203 is lipidated: GPI-anchor amidated asparagine. Positions 204–228 are cleaved as a propeptide — removed in mature form; sequence AAQTPRIPIRLLATLLFLLAMLLIL.

Belongs to the ephrin family. As to expression, expressed in a graded fashion across the tectum being more strongly expressed towards the posterior pole.

Its subcellular location is the cell membrane. Cell surface GPI-bound ligand for Eph receptors, a family of receptor tyrosine kinases which are crucial for migration, repulsion and adhesion during neuronal, vascular and epithelial development. Binds promiscuously Eph receptors residing on adjacent cells, leading to contact-dependent bidirectional signaling into neighboring cells. Induces compartmentalized signaling within a caveolae-like membrane microdomain when bound to the extracellular domain of its cognate receptor. This signaling event requires the activity of the Fyn tyrosine kinase. Activates the EPHA3 receptor to regulate cell-cell adhesion and cytoskeletal organization. With the receptor EPHA2 may regulate lens fiber cells shape and interactions and be important for lens transparency maintenance. May function actively to stimulate axon fasciculation. Induces growth cone collapse and repulsion of retinal ganglion cell axons. The protein is Ephrin-A5 (EFNA5) of Gallus gallus (Chicken).